A 314-amino-acid polypeptide reads, in one-letter code: MYMYEEERNNINNNQEGLRLEMAFPQHGFMFQQLHEDNAHHLPSPTSLPSCPPHLFYGGGGNYMMNRSMSFTGVSDHHHLTQKSPTTTNNMNDQDQVGEEDNLSDDGSHMMLGEKKKRLNLEQVRALEKSFELGNKLEPERKMQLAKALGLQPRQIAIWFQNRRARWKTKQLERDYDSLKKQFDVLKSDNDSLLAHNKKLHAELVALKKHDRKESAKIKREFAEASWSNNGSTENNHNNNSSDANHVSMIKDLFPSSIRSATATTTSTHIDHQIVQDQDQGFCNMFNGIDETTSASYWAWPDQQQQHHNHHQFN.

The disordered stretch occupies residues 77 to 109; that stretch reads HHHLTQKSPTTTNNMNDQDQVGEEDNLSDDGSH. Positions 82-95 are enriched in polar residues; the sequence is QKSPTTTNNMNDQD. A DNA-binding region (homeobox) is located at residues 112–171; that stretch reads LGEKKKRLNLEQVRALEKSFELGNKLEPERKMQLAKALGLQPRQIAIWFQNRRARWKTKQ. A leucine-zipper region spans residues 172-207; the sequence is LERDYDSLKKQFDVLKSDNDSLLAHNKKLHAELVAL.

It belongs to the HD-ZIP homeobox family. Class I subfamily. Expressed predominantly in flowers, and in the cortex of the root and the stem.

It localises to the nucleus. Probable transcription factor. This Arabidopsis thaliana (Mouse-ear cress) protein is Homeobox-leucine zipper protein HAT7 (HAT7).